Consider the following 121-residue polypeptide: Phosphoribosyl-ATP pyrophosphatase (121 aa).

The protein belongs to the PRA-PH family.

The protein localises to the cytoplasm. The catalysed reaction is 1-(5-phospho-beta-D-ribosyl)-ATP + H2O = 1-(5-phospho-beta-D-ribosyl)-5'-AMP + diphosphate + H(+). Its pathway is amino-acid biosynthesis; L-histidine biosynthesis; L-histidine from 5-phospho-alpha-D-ribose 1-diphosphate: step 2/9. In Burkholderia multivorans (strain ATCC 17616 / 249), this protein is Phosphoribosyl-ATP pyrophosphatase.